The primary structure comprises 538 residues: RNA-binding protein RO60 (538 aa).

The region spanning 16-369 is the TROVE domain; the sequence is VPNSEGCYVW…SFKLVEPTGK (354 aa). An RNA-binding region spans residues 120–284; sequence RIPTHLFTFI…DMPLTALLRN (165 aa). The VWFA-like domain stretch occupies residues 361–538; it reads FKLVEPTGKR…VIRNFTLDLI (178 aa). The a divalent metal cation site is built by S378, S380, and T445.

Belongs to the Ro 60 kDa family.

The protein resides in the cytoplasm. In terms of biological role, RNA-binding protein that binds to misfolded non-coding RNAs, pre-5S rRNA, and several small cytoplasmic RNA molecules known as Y RNAs. May play roles in cilia formation and/or maintenance. In Xenopus laevis (African clawed frog), this protein is RNA-binding protein RO60.